Here is a 141-residue protein sequence, read N- to C-terminus: NADPH-dependent 7-cyano-7-deazaguanine reductase (141 aa).

The active-site Thioimide intermediate is Cys56. The active-site Proton donor is the Asp63. Substrate-binding positions include 78–80 and 97–98; these read VEL and HE.

The protein belongs to the GTP cyclohydrolase I family. QueF type 1 subfamily.

It is found in the cytoplasm. The catalysed reaction is 7-aminomethyl-7-carbaguanine + 2 NADP(+) = 7-cyano-7-deazaguanine + 2 NADPH + 3 H(+). Its pathway is tRNA modification; tRNA-queuosine biosynthesis. Its function is as follows. Catalyzes the NADPH-dependent reduction of 7-cyano-7-deazaguanine (preQ0) to 7-aminomethyl-7-deazaguanine (preQ1). The chain is NADPH-dependent 7-cyano-7-deazaguanine reductase from Trichodesmium erythraeum (strain IMS101).